A 342-amino-acid chain; its full sequence is Phosphoribosylformylglycinamidine cyclo-ligase (342 aa).

Belongs to the AIR synthase family.

Its subcellular location is the cytoplasm. It catalyses the reaction 2-formamido-N(1)-(5-O-phospho-beta-D-ribosyl)acetamidine + ATP = 5-amino-1-(5-phospho-beta-D-ribosyl)imidazole + ADP + phosphate + H(+). Its pathway is purine metabolism; IMP biosynthesis via de novo pathway; 5-amino-1-(5-phospho-D-ribosyl)imidazole from N(2)-formyl-N(1)-(5-phospho-D-ribosyl)glycinamide: step 2/2. The sequence is that of Phosphoribosylformylglycinamidine cyclo-ligase from Latilactobacillus sakei subsp. sakei (strain 23K) (Lactobacillus sakei subsp. sakei).